A 430-amino-acid polypeptide reads, in one-letter code: Protein AST2 (430 aa).

Its function is as follows. Lipid raft-associated protein involved in the targeting of PMA1 from Golgi to the plasma membrane. May induce clustering of PMA1, which facilitates partition of PMA1 into lipid rafts after leaving the ER its and transport to the cell surface. This Saccharomyces cerevisiae (strain ATCC 204508 / S288c) (Baker's yeast) protein is Protein AST2.